Here is an 895-residue protein sequence, read N- to C-terminus: Catenin alpha-3 (895 aa).

Residues 74–107 (EMIAKEATVLKEELAAALQEVRKESKALKVSAER) are a coiled coil. Ser-160 bears the Phosphoserine mark. Residues 325 to 379 (RERIIAECNAIRQALQDLLTEYMSNTGKTERSNTLNTAIVNMSKKTRDLRRQLRK) are a coiled coil. A Phosphothreonine modification is found at Thr-361. The tract at residues 635 to 660 (DVSDLEDDHEVRSHTSIQTEGKTDRA) is disordered. A phosphoserine mark is found at Ser-637 and Ser-647. The residue at position 649 (Thr-649) is a Phosphothreonine.

Belongs to the vinculin/alpha-catenin family. Interacts with CTNNB1. Interacts with PKP2. As to expression, expressed in heart (at protein level).

The protein localises to the cytoplasm. The protein resides in the cytoskeleton. Its subcellular location is the cell junction. It localises to the desmosome. Its function is as follows. May be involved in formation of stretch-resistant cell-cell adhesion complexes. The protein is Catenin alpha-3 of Mus musculus (Mouse).